The primary structure comprises 222 residues: uncharacterized protein (222 aa).

Positions 8-77 (AKKNQIIYRY…NTPGYFVCKD (70 aa)) constitute an HTH gntR-type domain.

This is an uncharacterized protein from Mycoplasma genitalium (strain ATCC 33530 / DSM 19775 / NCTC 10195 / G37) (Mycoplasmoides genitalium).